The primary structure comprises 309 residues: Porphobilinogen deaminase (309 aa).

C241 is modified (S-(dipyrrolylmethanemethyl)cysteine).

It belongs to the HMBS family. In terms of assembly, monomer. Requires dipyrromethane as cofactor.

It carries out the reaction 4 porphobilinogen + H2O = hydroxymethylbilane + 4 NH4(+). It participates in porphyrin-containing compound metabolism; protoporphyrin-IX biosynthesis; coproporphyrinogen-III from 5-aminolevulinate: step 2/4. Tetrapolymerization of the monopyrrole PBG into the hydroxymethylbilane pre-uroporphyrinogen in several discrete steps. This Bacillus cereus (strain ZK / E33L) protein is Porphobilinogen deaminase.